Consider the following 61-residue polypeptide: Large ribosomal subunit protein uL30 (61 aa).

The protein belongs to the universal ribosomal protein uL30 family. In terms of assembly, part of the 50S ribosomal subunit.

The sequence is that of Large ribosomal subunit protein uL30 from Lactobacillus acidophilus (strain ATCC 700396 / NCK56 / N2 / NCFM).